The primary structure comprises 234 residues: Thiamine import ATP-binding protein ThiQ (234 aa).

Residues 2–230 (LRFSDVKYRY…EKPPELTQYL (229 aa)) enclose the ABC transporter domain. 32-39 (GPSGAGKS) provides a ligand contact to ATP.

Belongs to the ABC transporter superfamily. Thiamine importer (TC 3.A.1.19.1) family. As to quaternary structure, the complex is composed of two ATP-binding proteins (ThiQ), two transmembrane proteins (ThiP) and a solute-binding protein (ThiB).

Its subcellular location is the cell inner membrane. The enzyme catalyses thiamine(out) + ATP + H2O = thiamine(in) + ADP + phosphate + H(+). Functionally, part of the ABC transporter complex ThiBPQ involved in thiamine import. Responsible for energy coupling to the transport system. The chain is Thiamine import ATP-binding protein ThiQ from Aliivibrio fischeri (strain ATCC 700601 / ES114) (Vibrio fischeri).